Reading from the N-terminus, the 159-residue chain is Ribonuclease H (159 aa).

An RNase H type-1 domain is found at 1–142 (MHKQVEIFTD…CDELAKAAAQ (142 aa)). Residues Asp-10, Glu-48, Asp-70, and Asp-134 each coordinate Mg(2+). The interval 135-159 (ELAKAAAQSPTKEDTGYLESQQDKT) is disordered. Residues 145–159 (TKEDTGYLESQQDKT) are compositionally biased toward basic and acidic residues.

It belongs to the RNase H family. In terms of assembly, monomer. Mg(2+) serves as cofactor.

The protein resides in the cytoplasm. The enzyme catalyses Endonucleolytic cleavage to 5'-phosphomonoester.. Endonuclease that specifically degrades the RNA of RNA-DNA hybrids. The chain is Ribonuclease H from Proteus mirabilis (strain HI4320).